Reading from the N-terminus, the 113-residue chain is Pancreatic progenitor cell differentiation and proliferation factor B (113 aa).

This sequence belongs to the PPDPF family.

In terms of biological role, probable regulator of exocrine pancreas development. This Xenopus laevis (African clawed frog) protein is Pancreatic progenitor cell differentiation and proliferation factor B (ppdpf-b).